The chain runs to 142 residues: Hemoglobin subunit alpha (142 aa).

Positions 2–142 constitute a Globin domain; it reads VLSPADKTNV…VSTVLTSKYR (141 aa). Ser4 is subject to Phosphoserine. Residue Lys8 is modified to N6-succinyllysine. Phosphothreonine is present on Thr9. Lys12 is modified (N6-succinyllysine). At Lys17 the chain carries N6-acetyllysine; alternate. Lys17 carries the post-translational modification N6-succinyllysine; alternate. A Phosphotyrosine modification is found at Tyr25. Position 36 is a phosphoserine (Ser36). Lys41 is modified (N6-succinyllysine). Position 50 is a phosphoserine (Ser50). An O2-binding site is contributed by His59. His88 contributes to the heme b binding site. Ser103 is subject to Phosphoserine. Phosphothreonine is present on Thr109. Phosphoserine is present on residues Ser125 and Ser132. Residues Thr135 and Thr138 each carry the phosphothreonine modification. Residue Ser139 is modified to Phosphoserine.

It belongs to the globin family. As to quaternary structure, heterotetramer of two alpha chains and two beta chains. In terms of tissue distribution, red blood cells.

Its function is as follows. Involved in oxygen transport from the lung to the various peripheral tissues. Functionally, hemopressin acts as an antagonist peptide of the cannabinoid receptor CNR1. Hemopressin-binding efficiently blocks cannabinoid receptor CNR1 and subsequent signaling. This is Hemoglobin subunit alpha (HBA) from Sapajus apella (Brown-capped capuchin).